We begin with the raw amino-acid sequence, 463 residues long: Glutathione amide reductase (463 aa).

3 residues coordinate Ni(2+): Thr-2, Gln-3, and His-4. FAD-binding positions include Ser-14 to Gly-15, Glu-34, and Thr-41. Cys-42 and Cys-47 are disulfide-bonded. Residues Lys-50 and His-113–Ala-114 each bind FAD. Lys-50 is a binding site for NAD(+). Residues Ala-174 to Glu-180, Leu-197 to Glu-198, Val-230, and Gly-261 contribute to the NAD(+) site. FAD-binding positions include Asp-302 and Gln-308–Thr-310. The NAD(+) site is built by Gln-308 and Val-341. Position 437 (His-437) interacts with FAD. Residue His-437 is the Proton acceptor of the active site.

This sequence belongs to the class-I pyridine nucleotide-disulfide oxidoreductase family. Homodimer. FAD is required as a cofactor.

It catalyses the reaction 2 glutathione amide + NAD(+) = glutathione amide disulfide + NADH + H(+). Catalyzes the reduction of glutathione amide disulfide (GASSAG) to restore glutathione amide (GASH) in the presence of NADH. May play a role in GASH metabolism under anaerobic conditions as a sulfide carrier necessary for cytoplasmic sulfide oxidation. This Marichromatium gracile (Chromatium gracile) protein is Glutathione amide reductase.